A 942-amino-acid polypeptide reads, in one-letter code: MSEYKDTLNLPETGFPMRGNLANREPEMLKRWYKEDLYGEIRKAKKGKKSFVLHDGPPYANGDIHIGHALNKILKDIIIKSKTLSGFDAPYIPGWDCHGLPIELMVEKKVGKPGQKVTAAEFREKCREYAAGQVEGQKESFKRLGIMGEWDKPYRTMDFATEANIIRALGKIASKGHLLKGFKPVHWCTDCGSALAEAEVEYKDKVSPSIDVRFKAADEAALLSKFELTEGHEGQGDISIVIWTTTPWTLPANRAVCLRDDLEYVLIQTEGDNAERIIVAAELAKDVMDRAGIEHFHNLGFAKGADLELSQFQHPFYDFTVPAILGDHVTTDSGTGVVHTAPGHGQEDFAVGNKYNLEVANPVGSNGVYLPDTELFAGQHVFKANDAVVEVLKEKGALLHHHAYEHSYPHCWRHKTPIIFRATPQWFVSMDQAGLRAKALESIKNVEWMPEWGQSRIEGMIEGRPEWCISRQRTWGVPIALFVHKETAELHPNTLELIEKVAKLVEEKGIQAWWDVDAAELLGADADQYEKVLDTLDVWFDSGVTHFSVVDAREEYNGNSADLYLEGSDQHRGWFQSSLISSIAMKDEAPYKQVLTHGFVVDGHGRKMSKSIGNVVAPKDVTNKLGADILRLWVASTDYTGEVAVSDEILKRSADAYRRIRNTARFFLANLSGFNPETDIVPVEEMVALDRWAVGRALAAQEEIVKAYEEYNTHGVTQRLMQFCSIEMGSFYLDVIKDRQYTAKRGGNAQRSCQTALYYIVEALVRWMAPIMSFTADEIWNEMPGQRDKFVFTGEWFDGLFGLAEGEELNNEFWTEIQAVRGAVNKLLEDARKEKTIGGALQAEVTLFADDALAAKINKLEDELRFVLLTSAAKVKPLGEKTDAAQATDIEGLFVEVAAAEGEKCDRCWHHTPDVGTIEGHEKICGRCVSNVDGEGEVRKFA.

A 'HIGH' region motif is present at residues Pro-58 to His-68. Glu-566 is an L-isoleucyl-5'-AMP binding site. Residues Lys-607 to Ser-611 carry the 'KMSKS' region motif. Lys-610 lines the ATP pocket. Positions 905, 908, 925, and 928 each coordinate Zn(2+).

Belongs to the class-I aminoacyl-tRNA synthetase family. IleS type 1 subfamily. Monomer. The cofactor is Zn(2+).

It localises to the cytoplasm. The catalysed reaction is tRNA(Ile) + L-isoleucine + ATP = L-isoleucyl-tRNA(Ile) + AMP + diphosphate. Catalyzes the attachment of isoleucine to tRNA(Ile). As IleRS can inadvertently accommodate and process structurally similar amino acids such as valine, to avoid such errors it has two additional distinct tRNA(Ile)-dependent editing activities. One activity is designated as 'pretransfer' editing and involves the hydrolysis of activated Val-AMP. The other activity is designated 'posttransfer' editing and involves deacylation of mischarged Val-tRNA(Ile). This Vibrio campbellii (strain ATCC BAA-1116) protein is Isoleucine--tRNA ligase.